Here is a 313-residue protein sequence, read N- to C-terminus: tRNA-cytidine(32) 2-sulfurtransferase (313 aa).

The PP-loop motif motif lies at 47–52 (SGGKDS). Positions 122, 125, and 213 each coordinate [4Fe-4S] cluster.

The protein belongs to the TtcA family. As to quaternary structure, homodimer. It depends on Mg(2+) as a cofactor. Requires [4Fe-4S] cluster as cofactor.

Its subcellular location is the cytoplasm. It catalyses the reaction cytidine(32) in tRNA + S-sulfanyl-L-cysteinyl-[cysteine desulfurase] + AH2 + ATP = 2-thiocytidine(32) in tRNA + L-cysteinyl-[cysteine desulfurase] + A + AMP + diphosphate + H(+). It participates in tRNA modification. Functionally, catalyzes the ATP-dependent 2-thiolation of cytidine in position 32 of tRNA, to form 2-thiocytidine (s(2)C32). The sulfur atoms are provided by the cysteine/cysteine desulfurase (IscS) system. The protein is tRNA-cytidine(32) 2-sulfurtransferase of Yersinia pseudotuberculosis serotype IB (strain PB1/+).